Here is a 459-residue protein sequence, read N- to C-terminus: Spermatogenesis-associated protein 1 (459 aa).

Positions 193–205 (LKELPNKNQEEAG) are enriched in basic and acidic residues. The tract at residues 193–213 (LKELPNKNQEEAGGKATAEKS) is disordered. Coiled-coil stretches lie at residues 287 to 374 (TDIS…YKKL) and 400 to 453 (LIIQ…KKII).

Interacts with IFT20.

It localises to the cytoplasmic vesicle. Its subcellular location is the secretory vesicle. The protein resides in the acrosome. This Homo sapiens (Human) protein is Spermatogenesis-associated protein 1 (SPATA1).